Consider the following 559-residue polypeptide: GTP diphosphokinase CRSH2, chloroplastic (559 aa).

Residues methionine 1–glycine 37 constitute a chloroplast transit peptide. In terms of domain architecture, HD spans serine 87–methionine 187. EF-hand domains are found at residues alanine 449–glycine 484 and lysine 486–lysine 518. The Ca(2+) site is built by aspartate 462, asparagine 464, aspartate 466, arginine 468, glutamate 473, aspartate 496, asparagine 498, aspartate 500, serine 502, and glutamate 507.

Belongs to the RelA/SpoT family. In terms of tissue distribution, expressed in shoots.

Its subcellular location is the plastid. It localises to the chloroplast. The enzyme catalyses GTP + ATP = guanosine 3'-diphosphate 5'-triphosphate + AMP. With respect to regulation, activated by calcium. Its function is as follows. Possesses calcium-dependent ppGpp (guanosine 3'-diphosphate 5'-diphosphate) synthetase activity in vitro and is able to functionally complement E.coli relA mutants. May be involved in a rapid plant ppGpp-mediated response to pathogens and other stresses. The chain is GTP diphosphokinase CRSH2, chloroplastic from Oryza sativa subsp. japonica (Rice).